Reading from the N-terminus, the 119-residue chain is NADH-quinone oxidoreductase subunit A (119 aa).

3 consecutive transmembrane segments (helical) span residues 7 to 27 (YPVL…VSIG), 63 to 83 (LVAI…PWGV), and 88 to 108 (IGWP…LGFA).

This sequence belongs to the complex I subunit 3 family. NDH-1 is composed of 14 different subunits. Subunits NuoA, H, J, K, L, M, N constitute the membrane sector of the complex.

Its subcellular location is the cell inner membrane. The enzyme catalyses a quinone + NADH + 5 H(+)(in) = a quinol + NAD(+) + 4 H(+)(out). Its function is as follows. NDH-1 shuttles electrons from NADH, via FMN and iron-sulfur (Fe-S) centers, to quinones in the respiratory chain. The immediate electron acceptor for the enzyme in this species is believed to be ubiquinone. Couples the redox reaction to proton translocation (for every two electrons transferred, four hydrogen ions are translocated across the cytoplasmic membrane), and thus conserves the redox energy in a proton gradient. The chain is NADH-quinone oxidoreductase subunit A from Burkholderia vietnamiensis (strain G4 / LMG 22486) (Burkholderia cepacia (strain R1808)).